A 233-amino-acid polypeptide reads, in one-letter code: Aspartate/glutamate leucyltransferase (233 aa).

This sequence belongs to the R-transferase family. Bpt subfamily.

It localises to the cytoplasm. The catalysed reaction is N-terminal L-glutamyl-[protein] + L-leucyl-tRNA(Leu) = N-terminal L-leucyl-L-glutamyl-[protein] + tRNA(Leu) + H(+). The enzyme catalyses N-terminal L-aspartyl-[protein] + L-leucyl-tRNA(Leu) = N-terminal L-leucyl-L-aspartyl-[protein] + tRNA(Leu) + H(+). Functions in the N-end rule pathway of protein degradation where it conjugates Leu from its aminoacyl-tRNA to the N-termini of proteins containing an N-terminal aspartate or glutamate. This chain is Aspartate/glutamate leucyltransferase, found in Vibrio parahaemolyticus serotype O3:K6 (strain RIMD 2210633).